Reading from the N-terminus, the 464-residue chain is NADH-quinone oxidoreductase subunit N (464 aa).

The next 14 helical transmembrane spans lie at 6–26 (FLYI…LVLG), 36–56 (SMSL…LIYF), 75–95 (CLAR…FFFA), 101–121 (YEFA…VEAH), 123–143 (FLSF…LVCF), 157–177 (FFVL…LVYG), 197–217 (LGAT…LGAV), 231–253 (PTVA…FAGL), 257–279 (VVIP…MVVG), 293–313 (FAYA…TGVV), 317–337 (PVLF…TVLL), 360–380 (AFTF…SGFF), 395–415 (FGVP…IPCF), and 439–459 (NVGL…VVLL).

This sequence belongs to the complex I subunit 2 family. NDH-1 is composed of 14 different subunits. Subunits NuoA, H, J, K, L, M, N constitute the membrane sector of the complex.

The protein localises to the cell inner membrane. The catalysed reaction is a quinone + NADH + 5 H(+)(in) = a quinol + NAD(+) + 4 H(+)(out). NDH-1 shuttles electrons from NADH, via FMN and iron-sulfur (Fe-S) centers, to quinones in the respiratory chain. The immediate electron acceptor for the enzyme in this species is believed to be ubiquinone. Couples the redox reaction to proton translocation (for every two electrons transferred, four hydrogen ions are translocated across the cytoplasmic membrane), and thus conserves the redox energy in a proton gradient. The polypeptide is NADH-quinone oxidoreductase subunit N (Anaplasma phagocytophilum (strain HZ)).